The chain runs to 360 residues: Josephin-like protein (360 aa).

The Josephin domain occupies 5-192 (ESKIYHERQR…NQLPLASNYR (188 aa)). Residue Cys-18 is the Nucleophile of the active site. The active-site Proton acceptor is His-129.

The enzyme catalyses Thiol-dependent hydrolysis of ester, thioester, amide, peptide and isopeptide bonds formed by the C-terminal Gly of ubiquitin (a 76-residue protein attached to proteins as an intracellular targeting signal).. In terms of biological role, may act as a deubiquitinating enzyme. The polypeptide is Josephin-like protein (Arabidopsis thaliana (Mouse-ear cress)).